We begin with the raw amino-acid sequence, 493 residues long: Glutamyl-tRNA(Gln) amidotransferase subunit A (493 aa).

Residues K79 and S159 each act as charge relay system in the active site. S183 functions as the Acyl-ester intermediate in the catalytic mechanism.

This sequence belongs to the amidase family. GatA subfamily. Heterotrimer of A, B and C subunits.

It catalyses the reaction L-glutamyl-tRNA(Gln) + L-glutamine + ATP + H2O = L-glutaminyl-tRNA(Gln) + L-glutamate + ADP + phosphate + H(+). Allows the formation of correctly charged Gln-tRNA(Gln) through the transamidation of misacylated Glu-tRNA(Gln) in organisms which lack glutaminyl-tRNA synthetase. The reaction takes place in the presence of glutamine and ATP through an activated gamma-phospho-Glu-tRNA(Gln). This Brucella suis (strain ATCC 23445 / NCTC 10510) protein is Glutamyl-tRNA(Gln) amidotransferase subunit A.